The primary structure comprises 172 residues: Large ribosomal subunit protein uL10 (172 aa).

It belongs to the universal ribosomal protein uL10 family. In terms of assembly, part of the ribosomal stalk of the 50S ribosomal subunit. The N-terminus interacts with L11 and the large rRNA to form the base of the stalk. The C-terminus forms an elongated spine to which L12 dimers bind in a sequential fashion forming a multimeric L10(L12)X complex.

Forms part of the ribosomal stalk, playing a central role in the interaction of the ribosome with GTP-bound translation factors. The chain is Large ribosomal subunit protein uL10 from Bartonella henselae (strain ATCC 49882 / DSM 28221 / CCUG 30454 / Houston 1) (Rochalimaea henselae).